Here is a 718-residue protein sequence, read N- to C-terminus: Polyribonucleotide nucleotidyltransferase (718 aa).

The Mg(2+) site is built by Asp491 and Asp497. Residues 558-617 form the KH domain; sequence PRMLTIKINPEKIRDVIGKGGATIRALTEETGTQIDISDDGTIVIASVDEGQAKEAQRRI. Residues 627-695 form the S1 motif domain; the sequence is GQVYDGSVLR…EKGRLRLSVK (69 aa).

This sequence belongs to the polyribonucleotide nucleotidyltransferase family. It depends on Mg(2+) as a cofactor.

It localises to the cytoplasm. It carries out the reaction RNA(n+1) + phosphate = RNA(n) + a ribonucleoside 5'-diphosphate. Involved in mRNA degradation. Catalyzes the phosphorolysis of single-stranded polyribonucleotides processively in the 3'- to 5'-direction. The sequence is that of Polyribonucleotide nucleotidyltransferase from Bordetella avium (strain 197N).